The chain runs to 115 residues: NADH-ubiquinone oxidoreductase chain 3 (115 aa).

3 helical membrane-spanning segments follow: residues isoleucine 4 to leucine 24, phenylalanine 55 to leucine 75, and serine 84 to tyrosine 104.

Belongs to the complex I subunit 3 family. In terms of assembly, core subunit of respiratory chain NADH dehydrogenase (Complex I) which is composed of 45 different subunits. Interacts with TMEM186. Interacts with TMEM242.

The protein localises to the mitochondrion inner membrane. The catalysed reaction is a ubiquinone + NADH + 5 H(+)(in) = a ubiquinol + NAD(+) + 4 H(+)(out). Core subunit of the mitochondrial membrane respiratory chain NADH dehydrogenase (Complex I) which catalyzes electron transfer from NADH through the respiratory chain, using ubiquinone as an electron acceptor. Essential for the catalytic activity of complex I. The polypeptide is NADH-ubiquinone oxidoreductase chain 3 (Necromys lactens (Rufous-bellied bolo mouse)).